A 226-amino-acid polypeptide reads, in one-letter code: tRNA (guanine-N(1)-)-methyltransferase (226 aa).

Residues Gly110 and 129 to 134 contribute to the S-adenosyl-L-methionine site; that span reads IGDYIL.

This sequence belongs to the RNA methyltransferase TrmD family. In terms of assembly, homodimer.

It is found in the cytoplasm. The enzyme catalyses guanosine(37) in tRNA + S-adenosyl-L-methionine = N(1)-methylguanosine(37) in tRNA + S-adenosyl-L-homocysteine + H(+). Functionally, specifically methylates guanosine-37 in various tRNAs. This Malacoplasma penetrans (strain HF-2) (Mycoplasma penetrans) protein is tRNA (guanine-N(1)-)-methyltransferase.